We begin with the raw amino-acid sequence, 297 residues long: UDP-N-acetylenolpyruvoylglucosamine reductase (297 aa).

Positions 27–192 (IGGPADALLE…LRAAYRLHPG (166 aa)) constitute an FAD-binding PCMH-type domain. The active site involves Arg-170. Ser-220 functions as the Proton donor in the catalytic mechanism. The active site involves Glu-290.

The protein belongs to the MurB family. FAD serves as cofactor.

It is found in the cytoplasm. It catalyses the reaction UDP-N-acetyl-alpha-D-muramate + NADP(+) = UDP-N-acetyl-3-O-(1-carboxyvinyl)-alpha-D-glucosamine + NADPH + H(+). Its pathway is cell wall biogenesis; peptidoglycan biosynthesis. Functionally, cell wall formation. This is UDP-N-acetylenolpyruvoylglucosamine reductase from Rubrobacter xylanophilus (strain DSM 9941 / JCM 11954 / NBRC 16129 / PRD-1).